A 424-amino-acid chain; its full sequence is L-glutamine:2-deoxy-scyllo-inosose aminotransferase (424 aa).

K202 carries the N6-(pyridoxal phosphate)lysine modification.

The protein belongs to the DegT/DnrJ/EryC1 family. L-glutamine:2-deoxy-scyllo-inosose/scyllo-inosose aminotransferase subfamily. Requires pyridoxal 5'-phosphate as cofactor.

It catalyses the reaction 2-deoxy-L-scyllo-inosose + L-glutamine = 2-deoxy-scyllo-inosamine + 2-oxoglutaramate. The catalysed reaction is 3-amino-2,3-dideoxy-scyllo-inosose + L-glutamine = 2-deoxystreptamine + 2-oxoglutaramate. It functions in the pathway metabolic intermediate biosynthesis; 2-deoxystreptamine biosynthesis; 2-deoxystreptamine from D-glucose 6-phosphate: step 2/4. The protein operates within metabolic intermediate biosynthesis; 2-deoxystreptamine biosynthesis; 2-deoxystreptamine from D-glucose 6-phosphate: step 4/4. Its pathway is antibiotic biosynthesis; paromomycin biosynthesis. Its function is as follows. Catalyzes the PLP-dependent transamination of 2-deoxy-scyllo-inosose (2-DOI) to form 2-deoxy-scyllo-inosamine (2-DOIA) using L-glutamine as the amino donor. Also catalyzes the transamination of 3-amino-2,3-dideoxy-scyllo-inosose (keto-2-DOIA) into 2-deoxystreptamine (2-DOS). The sequence is that of L-glutamine:2-deoxy-scyllo-inosose aminotransferase (parS) from Streptomyces paromomycinus (Streptomyces rimosus subsp. paromomycinus).